The sequence spans 20 residues: Hongotoxin-5 (20 aa).

This sequence belongs to the short scorpion toxin superfamily. Potassium channel inhibitor family. Alpha-KTx 02 subfamily. Expressed by the venom gland.

Its subcellular location is the secreted. Its function is as follows. Potent selective inhibitor of Kv1/KCNA voltage-gated potassium channels. This is Hongotoxin-5 from Centruroides limbatus (Bark scorpion).